A 176-amino-acid chain; its full sequence is Large ribosomal subunit protein uL6 (176 aa).

This sequence belongs to the universal ribosomal protein uL6 family. In terms of assembly, part of the 50S ribosomal subunit.

Functionally, this protein binds to the 23S rRNA, and is important in its secondary structure. It is located near the subunit interface in the base of the L7/L12 stalk, and near the tRNA binding site of the peptidyltransferase center. This is Large ribosomal subunit protein uL6 from Lactobacillus delbrueckii subsp. bulgaricus (strain ATCC 11842 / DSM 20081 / BCRC 10696 / JCM 1002 / NBRC 13953 / NCIMB 11778 / NCTC 12712 / WDCM 00102 / Lb 14).